An 89-amino-acid chain; its full sequence is Small ribosomal subunit protein uS15 (89 aa).

The protein belongs to the universal ribosomal protein uS15 family. In terms of assembly, part of the 30S ribosomal subunit. Forms a bridge to the 50S subunit in the 70S ribosome, contacting the 23S rRNA.

Functionally, one of the primary rRNA binding proteins, it binds directly to 16S rRNA where it helps nucleate assembly of the platform of the 30S subunit by binding and bridging several RNA helices of the 16S rRNA. Forms an intersubunit bridge (bridge B4) with the 23S rRNA of the 50S subunit in the ribosome. This Limosilactobacillus reuteri (strain DSM 20016) (Lactobacillus reuteri) protein is Small ribosomal subunit protein uS15.